A 506-amino-acid polypeptide reads, in one-letter code: RNA-splicing ligase RtcB homolog (506 aa).

Residues aspartate 120, cysteine 123, histidine 228, histidine 260, and histidine 354 each contribute to the Mn(2+) site. Residue 227–231 (NHYAE) coordinates GMP. Residues 354–355 (HN), 403–406 (GGSM), serine 410, 429–432 (HGAG), and lysine 505 contribute to the GMP site. The GMP-histidine intermediate role is filled by histidine 429.

The protein belongs to the RtcB family. Catalytic component of the tRNA-splicing ligase complex. The cofactor is Mn(2+).

It carries out the reaction a 3'-end 3'-phospho-ribonucleotide-RNA + a 5'-end dephospho-ribonucleoside-RNA + GTP = a ribonucleotidyl-ribonucleotide-RNA + GMP + diphosphate. It catalyses the reaction a 3'-end 2',3'-cyclophospho-ribonucleotide-RNA + a 5'-end dephospho-ribonucleoside-RNA + GTP + H2O = a ribonucleotidyl-ribonucleotide-RNA + GMP + diphosphate + H(+). Its function is as follows. Catalytic subunit of the tRNA-splicing ligase complex that acts by directly joining spliced tRNA halves to mature-sized tRNAs by incorporating the precursor-derived splice junction phosphate into the mature tRNA as a canonical 3',5'-phosphodiester. May act as an RNA ligase with broad substrate specificity, and may function toward other RNAs. The protein is RNA-splicing ligase RtcB homolog of Anopheles gambiae (African malaria mosquito).